Consider the following 257-residue polypeptide: MDDYTREMMDLKTLVTRTLEKKGVLAKIRAELRASVFEAIEEEDRVIENNEGLPPALLGSCNDRARQLHASPSGRLLSALICEYLDWAQLNHTLKVYQPECNSAKDSWKSEIRDFSINNGYELNRNEDSRPLLLDVLEGFLKFENMTQVMGGSSRRESETESSLSLDTRNPPRRSSASDSLPHQRRSVSASQASGAATSGYRKDESNWRYDTEDMPEEVMRASTALENLQLDRKTRNLTSSWRNVKDGTSEEEEGKD.

The LisH domain occupies 73–105 (SGRLLSALICEYLDWAQLNHTLKVYQPECNSAK). Disordered regions lie at residues 148–216 (QVMG…EDMP) and 231–257 (LDRKTRNLTSSWRNVKDGTSEEEEGKD). A compositionally biased stretch (low complexity) spans 187-199 (SVSASQASGAATS). Basic and acidic residues-rich tracts occupy residues 201 to 212 (YRKDESNWRYDT) and 244 to 257 (NVKDGTSEEEEGKD).

Interacts with CEN1, LNG1/TRM2 and LNG2/TRM1 (via C-terminus).

It is found in the cytoplasm. It localises to the cytoskeleton. In terms of biological role, involved in the control of the dynamic organization of the cortical cytoskeleton. May play a role in the organization of microtubule arrays at the centrosome through interaction with centrin 1 (CEN1). The chain is Protein TONNEAU 1b (TON1B) from Arabidopsis thaliana (Mouse-ear cress).